Here is a 183-residue protein sequence, read N- to C-terminus: UPF0200 protein MMP1282 (183 aa).

8-15 (GMPGSGKS) contacts ATP.

It belongs to the UPF0200 family.

The chain is UPF0200 protein MMP1282 from Methanococcus maripaludis (strain DSM 14266 / JCM 13030 / NBRC 101832 / S2 / LL).